The following is a 406-amino-acid chain: Glutamyl-tRNA reductase (406 aa).

Substrate contacts are provided by residues 49 to 52 (TCHR), S107, 112 to 114 (EPQ), and Q118. The active-site Nucleophile is C50. Position 187-192 (187-192 (GAGETG)) interacts with NADP(+).

This sequence belongs to the glutamyl-tRNA reductase family. Homodimer.

It carries out the reaction (S)-4-amino-5-oxopentanoate + tRNA(Glu) + NADP(+) = L-glutamyl-tRNA(Glu) + NADPH + H(+). It participates in porphyrin-containing compound metabolism; protoporphyrin-IX biosynthesis; 5-aminolevulinate from L-glutamyl-tRNA(Glu): step 1/2. Catalyzes the NADPH-dependent reduction of glutamyl-tRNA(Glu) to glutamate 1-semialdehyde (GSA). This chain is Glutamyl-tRNA reductase, found in Thermomicrobium roseum (strain ATCC 27502 / DSM 5159 / P-2).